The primary structure comprises 360 residues: F-box protein SKP2A (360 aa).

The F-box domain maps to 25–71 (IKEWKDIPVELLMRILSLVDDRNVIVASGVCTGWRDAISFGLTRLRL). (indol-3-yl)acetate-binding positions include 127–128 (SL), 149–152 (NLSG), 175–178 (NLCG), and N202.

Part of a SCF (ASK-cullin-F-box) protein ligase complex. Interacts with CUL1 (RUB1-modified and non-modified isoforms), SKP1A, SKP1B and ASK18. Recruit DPB and phosphorylated E2FC. Interacts with auxin. Auxin controls the interaction with DPB. In terms of processing, polyubiquitinated and subsequently targeted to proteasome. Auxin promotes this ubiquitination-mediated degradation. Expressed in embryo, seedlings, hypocotyl, roots, leaves and flowers.

The protein resides in the nucleus. The protein operates within protein modification; protein ubiquitination. In terms of biological role, component of SCF(SKP2A) E3 ubiquitin ligase complexes, which mediate the ubiquitination and subsequent proteasomal degradation of target proteins (including cell cycle repressors). Acts as an auxin receptor; one active auxin is indole-3-acetate. Regulates the stability of the transcription factors E2FC and DPB, repressors of cell proliferation. Confers increase tolerance to osmotic stress by promoting cell division, especially in meristems. Promotes the formation of lateral root primordia. In Arabidopsis thaliana (Mouse-ear cress), this protein is F-box protein SKP2A (SKP2A).